We begin with the raw amino-acid sequence, 121 residues long: MIIKPSRNELRKKRHLRVRKKVFGTPERPRLNVYKSLKHIYAQIIDDTKGHTLVSASTLDPELRDVAKGANKQSAKLVGELIAKRALEKGIKDVVFDRGGYLYHGVVKELADAARQAGLNF.

Belongs to the universal ribosomal protein uL18 family. Part of the 50S ribosomal subunit; part of the 5S rRNA/L5/L18/L25 subcomplex. Contacts the 5S and 23S rRNAs.

Functionally, this is one of the proteins that bind and probably mediate the attachment of the 5S RNA into the large ribosomal subunit, where it forms part of the central protuberance. The sequence is that of Large ribosomal subunit protein uL18 from Caldanaerobacter subterraneus subsp. tengcongensis (strain DSM 15242 / JCM 11007 / NBRC 100824 / MB4) (Thermoanaerobacter tengcongensis).